Here is a 950-residue protein sequence, read N- to C-terminus: Lon protease homolog, mitochondrial (950 aa).

Residues 1-65 (MAASTGYVRL…VPMGGGQWRG (65 aa)) constitute a mitochondrion transit peptide. Disordered stretches follow at residues 67–94 (WDAG…SGEG) and 212–243 (PEGL…LGAK). The region spanning 112-360 (LPLIAISRNP…KALSLLKKEF (249 aa)) is the Lon N-terminal domain. The segment covering 224–233 (KSRRKLKRGK) has biased composition (basic residues). 513–520 (GPPGVGKT) is an ATP binding site. The region spanning 749-939 (VTPPGVVMGL…RDIFRIAFPL (191 aa)) is the Lon proteolytic domain. Catalysis depends on residues S845 and K888.

Belongs to the peptidase S16 family. Homohexamer. Organized in a ring with a central cavity. The ATP-binding and proteolytic domains (AP-domain) form a hexameric chamber, while the N-terminal domain is arranged as a trimer of dimers. DNA and RNA binding is stimulated by substrate and inhibited by ATP binding. Interacts with TWNK and mitochondrial DNA polymerase subunit POLG.

The protein localises to the mitochondrion matrix. It catalyses the reaction Hydrolysis of proteins in presence of ATP.. In terms of biological role, ATP-dependent serine protease that mediates the selective degradation of misfolded, unassembled or oxidatively damaged polypeptides as well as certain short-lived regulatory proteins in the mitochondrial matrix. Endogenous substrates include mitochondrial steroidogenic acute regulatory (StAR) protein, DELE1, helicase Twinkle (TWNK) and the large ribosomal subunit protein MRPL32/bL32m. MRPL32/bL32m is protected from degradation by LONP1 when it is bound to a nucleic acid (RNA), but TWNK is not. May also have a chaperone function in the assembly of inner membrane protein complexes. Participates in the regulation of mitochondrial gene expression and in the maintenance of the integrity of the mitochondrial genome. Binds to mitochondrial promoters and RNA in a single-stranded, site-specific, and strand-specific manner. May regulate mitochondrial DNA replication and/or gene expression using site-specific, single-stranded DNA binding to target the degradation of regulatory proteins binding to adjacent sites in mitochondrial promoters. The protein is Lon protease homolog, mitochondrial (Lonp1) of Rattus norvegicus (Rat).